Here is a 272-residue protein sequence, read N- to C-terminus: Putative phosphoenolpyruvate synthase regulatory protein (272 aa).

152–159 (GVSRCGKT) provides a ligand contact to ADP.

This sequence belongs to the pyruvate, phosphate/water dikinase regulatory protein family. PSRP subfamily.

The catalysed reaction is [pyruvate, water dikinase] + ADP = [pyruvate, water dikinase]-phosphate + AMP + H(+). It carries out the reaction [pyruvate, water dikinase]-phosphate + phosphate + H(+) = [pyruvate, water dikinase] + diphosphate. Bifunctional serine/threonine kinase and phosphorylase involved in the regulation of the phosphoenolpyruvate synthase (PEPS) by catalyzing its phosphorylation/dephosphorylation. The sequence is that of Putative phosphoenolpyruvate synthase regulatory protein from Pseudomonas fluorescens (strain SBW25).